The primary structure comprises 569 residues: Cell death protein 4 (569 aa).

The CARD domain maps to 1–91 (MLCEIECRAL…HLKDFLDEYL (91 aa)). Residues 116-442 (DRKLLLGNVP…IWSCVIPVDI (327 aa)) enclose the NB-ARC domain. ATP contacts are provided by residues F131, 162–167 (GSGKSV), and Q171. Residue S166 coordinates Mg(2+).

As to quaternary structure, associates as an asymmetric homodimer with ced-9. Upon release from ced-9, forms an octamer, known as the apoptosome, and interacts with ced-3; the interaction results in ced-3 autoproteolytic cleavage and activation. The octamer (a tetramer of an asymmetric dimer) also interacts with two processed ced-3 to form a stable holoenzyme. Interacts with sex-determining protein fem-1. May form a complex composed of ced-3, ced-4 and mac-1 or of ced-9, ced-4 and mac-1. Within the complex, interacts with ced-4.

Its subcellular location is the mitochondrion. The protein localises to the cytoplasm. It localises to the perinuclear region. Its function is as follows. Plays a major role in programmed cell death (PCD, apoptosis). egl-1 binds to and directly inhibits the activity of ced-9, releasing the cell death activator ced-4 from a ced-9/ced-4 containing protein complex and allowing ced-4 to induce caspase ced-3 autoproteolytic cleavage and activation. Also forms a holoenzyme with processed ced-3 enhancing ced-3 activity. Component of the egl-1, ced-9, ced-4 and ced-3 apoptotic signaling cascade required for the initiation of programmed cell death in cells fated to die during embryonic and postembryonic development. During oogenesis, required for germline apoptosis downstream of ced-9 and upstream of ced-3 but independently of egl-1. May regulate germline apoptosis in response to DNA damage, probably downstream of let-60/ras and mpk-1 pathway. Regulates CEP neuron apoptosis in response to high Al(3+) levels. During male tail morphogenesis, promotes apoptosis of the tail-spike cell. During larval development, required for the elimination of transient presynaptic components downstream of egl-1 and ced-9 and upstream of ced-3 apoptotic pathway. Together with ain-1, a component of the miRNA-induced-silencing complex (miRISC), and probably upstream of ced-3, regulates temporal cell fate patterning during larval development. May play a role in resistance to S.typhimurium-mediated infection. This Caenorhabditis briggsae protein is Cell death protein 4.